Consider the following 436-residue polypeptide: CaM kinase-like vesicle-associated protein (436 aa).

The region spanning 24-286 (YDLGQIVKSE…AQEAINHEWI (263 aa)) is the Protein kinase domain. Residues 328–436 (APENQTAAAT…ALDTVEEQSG (109 aa)) form a disordered region. Over residues 333–409 (TAAATAPAAE…QPPAEPVVHV (77 aa)) the composition is skewed to low complexity.

This sequence belongs to the protein kinase superfamily. CAMK Ser/Thr protein kinase family. Interacts with calmodulin, in the presence of calcium. Ca(2+) serves as cofactor.

It localises to the cytoplasmic vesicle membrane. Does not appear to have detectable kinase activity. The sequence is that of CaM kinase-like vesicle-associated protein (camkv) from Danio rerio (Zebrafish).